Consider the following 172-residue polypeptide: Putative phosphoesterase BAMEG_3349 (172 aa).

The active-site Proton donor is His-34. Short sequence motifs (HXTX) lie at residues 34–37 (HITL) and 115–118 (HLTI). The active-site Proton acceptor is His-115.

The protein belongs to the 2H phosphoesterase superfamily. YjcG family.

The chain is Putative phosphoesterase BAMEG_3349 from Bacillus anthracis (strain CDC 684 / NRRL 3495).